The sequence spans 96 residues: Putative pterin-4-alpha-carbinolamine dehydratase (96 aa).

The protein belongs to the pterin-4-alpha-carbinolamine dehydratase family.

The catalysed reaction is (4aS,6R)-4a-hydroxy-L-erythro-5,6,7,8-tetrahydrobiopterin = (6R)-L-erythro-6,7-dihydrobiopterin + H2O. The sequence is that of Putative pterin-4-alpha-carbinolamine dehydratase from Paraburkholderia xenovorans (strain LB400).